The sequence spans 93 residues: MADITDIKTILYTEKSLNLQEQGVVVIQTSPKMTKNGLKEVLREYFGVTPVRINSLKMDGKIKRFRGREGQRNSFKKFYVKLPEGVSLESSEA.

Belongs to the universal ribosomal protein uL23 family. As to quaternary structure, part of the 50S ribosomal subunit. Contacts protein L29, and trigger factor when it is bound to the ribosome.

One of the early assembly proteins it binds 23S rRNA. One of the proteins that surrounds the polypeptide exit tunnel on the outside of the ribosome. Forms the main docking site for trigger factor binding to the ribosome. The sequence is that of Large ribosomal subunit protein uL23 from Campylobacter lari (strain RM2100 / D67 / ATCC BAA-1060).